Here is a 135-residue protein sequence, read N- to C-terminus: RxLR effector protein PITG_02860 (135 aa).

Positions 1-18 are cleaved as a signal peptide; the sequence is MRLAFLLLAVSHFICGNA. Positions 48 to 64 match the RxLR-dEER motif; sequence RKLLRTDERLSEANEER. The NRL1-binding domain stretch occupies residues 126–135; sequence LKDPQAFRGP.

Belongs to the RxLR effector family. In terms of assembly, interacts with host ubiquitin E3 ligase NRL1.

Its subcellular location is the secreted. It is found in the host cytoplasm. The protein localises to the host nucleus. The protein resides in the host nucleoplasm. Functionally, effector that promotes P.infestans virulence and suppresses pattern-triggered immunity (PTI). Interacts with the host ubiquitin E3 ligase NRL1 and enhances the association between NRL1 and SWAP70 to promote proteasome-mediated degradation of SWAP70, which results in the suppression of immunity. The polypeptide is RxLR effector protein PITG_02860 (Phytophthora infestans (strain T30-4) (Potato late blight agent)).